The chain runs to 65 residues: Large ribosomal subunit protein bL35 (65 aa).

Belongs to the bacterial ribosomal protein bL35 family.

The protein is Large ribosomal subunit protein bL35 of Prochlorococcus marinus (strain MIT 9301).